The following is a 340-amino-acid chain: DNA-directed RNA polymerase subunit alpha (340 aa).

The interval 1-235 is alpha N-terminal domain (alpha-NTD); it reads MYRNWTELIK…DQLNPFINFD (235 aa). Residues 251 to 340 are alpha C-terminal domain (alpha-CTD); that stretch reads WNPNLFRKVD…LSKQFEEENF (90 aa).

Belongs to the RNA polymerase alpha chain family. As to quaternary structure, homodimer. The RNAP catalytic core consists of 2 alpha, 1 beta, 1 beta' and 1 omega subunit. When a sigma factor is associated with the core the holoenzyme is formed, which can initiate transcription.

It carries out the reaction RNA(n) + a ribonucleoside 5'-triphosphate = RNA(n+1) + diphosphate. Functionally, DNA-dependent RNA polymerase catalyzes the transcription of DNA into RNA using the four ribonucleoside triphosphates as substrates. The polypeptide is DNA-directed RNA polymerase subunit alpha (Magnetococcus marinus (strain ATCC BAA-1437 / JCM 17883 / MC-1)).